The chain runs to 364 residues: UDP-N-acetylglucosamine--N-acetylmuramyl-(pentapeptide) pyrophosphoryl-undecaprenol N-acetylglucosamine transferase (364 aa).

UDP-N-acetyl-alpha-D-glucosamine-binding positions include Thr16 to Gly18, Asn128, Arg166, Ser195, Ile249, and Gln294.

It belongs to the glycosyltransferase 28 family. MurG subfamily.

It localises to the cell inner membrane. The catalysed reaction is di-trans,octa-cis-undecaprenyl diphospho-N-acetyl-alpha-D-muramoyl-L-alanyl-D-glutamyl-meso-2,6-diaminopimeloyl-D-alanyl-D-alanine + UDP-N-acetyl-alpha-D-glucosamine = di-trans,octa-cis-undecaprenyl diphospho-[N-acetyl-alpha-D-glucosaminyl-(1-&gt;4)]-N-acetyl-alpha-D-muramoyl-L-alanyl-D-glutamyl-meso-2,6-diaminopimeloyl-D-alanyl-D-alanine + UDP + H(+). It participates in cell wall biogenesis; peptidoglycan biosynthesis. Functionally, cell wall formation. Catalyzes the transfer of a GlcNAc subunit on undecaprenyl-pyrophosphoryl-MurNAc-pentapeptide (lipid intermediate I) to form undecaprenyl-pyrophosphoryl-MurNAc-(pentapeptide)GlcNAc (lipid intermediate II). This is UDP-N-acetylglucosamine--N-acetylmuramyl-(pentapeptide) pyrophosphoryl-undecaprenol N-acetylglucosamine transferase from Chromohalobacter salexigens (strain ATCC BAA-138 / DSM 3043 / CIP 106854 / NCIMB 13768 / 1H11).